The primary structure comprises 356 residues: S-adenosylmethionine:tRNA ribosyltransferase-isomerase (356 aa).

This sequence belongs to the QueA family. As to quaternary structure, monomer.

It localises to the cytoplasm. The enzyme catalyses 7-aminomethyl-7-carbaguanosine(34) in tRNA + S-adenosyl-L-methionine = epoxyqueuosine(34) in tRNA + adenine + L-methionine + 2 H(+). Its pathway is tRNA modification; tRNA-queuosine biosynthesis. Its function is as follows. Transfers and isomerizes the ribose moiety from AdoMet to the 7-aminomethyl group of 7-deazaguanine (preQ1-tRNA) to give epoxyqueuosine (oQ-tRNA). The sequence is that of S-adenosylmethionine:tRNA ribosyltransferase-isomerase from Escherichia coli (strain ATCC 8739 / DSM 1576 / NBRC 3972 / NCIMB 8545 / WDCM 00012 / Crooks).